A 547-amino-acid chain; its full sequence is Chaperonin GroEL (547 aa).

Residues 30 to 33, Lys-51, 87 to 91, Gly-415, and Asp-496 contribute to the ATP site; these read TLGP and DGTTT.

This sequence belongs to the chaperonin (HSP60) family. Forms a cylinder of 14 subunits composed of two heptameric rings stacked back-to-back. Interacts with the co-chaperonin GroES.

The protein resides in the cytoplasm. It carries out the reaction ATP + H2O + a folded polypeptide = ADP + phosphate + an unfolded polypeptide.. Functionally, together with its co-chaperonin GroES, plays an essential role in assisting protein folding. The GroEL-GroES system forms a nano-cage that allows encapsulation of the non-native substrate proteins and provides a physical environment optimized to promote and accelerate protein folding. The protein is Chaperonin GroEL of Histophilus somni (strain 129Pt) (Haemophilus somnus).